A 993-amino-acid polypeptide reads, in one-letter code: Serine/threonine-protein phosphatase 6 regulatory ankyrin repeat subunit B (993 aa).

28 ANK repeats span residues 7-36 (TDQPPLVQAIFSGDPEEIRMLIHKTEDVNT), 40-69 (EKRTPLHVAAFLGDAEIIELLILSGARVNA), 73-102 (MWLTPLHRAVASRSEEAVQVLIKHSADVNA), 106-135 (NWQTPLHVAAANKAVKCAEVIIPLLSSVNV), 139-168 (GGRTALHHAALNGHVEMVNLLLAKGANINA), 172-201 (KDRRALHWAAYMGHLDVVALLINHGAEVTC), 205-234 (KGYTPLHAAASNGQINVVKHLLNLGVEIDE), 238-267 (YGNTALHIACYNGQDAVVNELIDYGANVNQ), 271-301 (NGFTPLHFAAASTHGALCLELLVNNGADVNI), 305-334 (DGKSPLHMTAVHGRFTRSQTLIQNGGEIDC), 338-367 (DGNTPLHVAARYGHELLINTLITSGADTAK), 371-400 (HSMFPLHLAALNAHSDCCRKLLSSGFEIDT), 404-433 (FGRTCLHAAAAGGNVECIKLLQSSGADFHK), 437-466 (CGRTPLHYAAANCHFHCIETLVTTGANVNE), 470-498 (WGRTALHYAAASDMDRNKTILGNAHDNSE), 531-561 (EGYNSIHYAAAYGHRQCLELLLERTNSGFEE), 566-595 (ATKSPLHLAAYNGHHQALEVLLQSLVDLDI), 599-628 (KGRTALDLAAFKGHTECVEALINQGASIFV), 633-662 (TKRTPLHASVINGHTLCLRLLLEIADNPEA), 669-698 (KGQTPLMLAVAYGHIDAVSLLLEKEANVDT), 702-731 (LGCTALHRGIMTGHEECVQMLLEQEVSILC), 735-764 (RGRTPLHYAAARGHATWLSELLQMALSEED), 771-800 (QGYTPLHWACYNGNENCIEVLLEQKCFRKF), 803-832 (NPFTPLHCAIINDHGNCASLLLGAIDSSIV), 838-867 (KGRTPLHAAAFADHVECLQLLLRHSAPVNA), 871-901 (SGKTALMMAAENGQAGAVDILVNSAQADLTV), 905-934 (DLNTPLHLACSKGHEKCALLILDKIQDESL), and 941-970 (ALQTPLHVAARNGLKVVVEELLAKGACVLA).

Protein phosphatase 6 (PP6) holoenzyme is proposed to be a heterotrimeric complex formed by the catalytic subunit, a SAPS domain-containing subunit (PP6R) and an ankyrin repeat-domain containing regulatory subunit (ARS). Interacts with PPP6R1.

Functionally, putative regulatory subunit of protein phosphatase 6 (PP6) that may be involved in the recognition of phosphoprotein substrates. The sequence is that of Serine/threonine-protein phosphatase 6 regulatory ankyrin repeat subunit B (ANKRD44) from Homo sapiens (Human).